Consider the following 302-residue polypeptide: ATP synthase gamma chain, sodium ion specific (302 aa).

Belongs to the ATPase gamma chain family. As to quaternary structure, F-type ATPases have 2 components, CF(1) - the catalytic core - and CF(0) - the membrane proton channel. CF(1) has five subunits: alpha(3), beta(3), gamma(1), delta(1), epsilon(1). CF(0) has three main subunits: a, b and c.

It is found in the cell membrane. Its activity is regulated as follows. Inhibited by nitrate. Its function is as follows. Produces ATP from ADP in the presence of a proton gradient across the membrane. The gamma chain is believed to be important in regulating ATPase activity and the flow of protons through the CF(0) complex. The polypeptide is ATP synthase gamma chain, sodium ion specific (atpG) (Acetobacterium woodii (strain ATCC 29683 / DSM 1030 / JCM 2381 / KCTC 1655 / WB1)).